The chain runs to 241 residues: Glutathione S-transferase omega-1 (241 aa).

S2 bears the N-acetylserine mark. Positions 22-101 constitute a GST N-terminal domain; that stretch reads GQIRVYSMRF…YLDEAYPEKK (80 aa). C32 (nucleophile) is an active-site residue. K57 is modified (N6-acetyllysine). Glutathione is bound by residues K59, V72, and 85–86; that span reads ES. The GST C-terminal domain maps to 106 to 228; sequence DPYEKACQKM…AKTYRDYLSL (123 aa). At S129 the chain carries Phosphoserine. N6-acetyllysine occurs at positions 143, 148, and 152.

It belongs to the GST superfamily. Omega family. As to quaternary structure, homodimer.

It is found in the cytoplasm. The protein localises to the cytosol. It catalyses the reaction RX + glutathione = an S-substituted glutathione + a halide anion + H(+). The catalysed reaction is L-dehydroascorbate + 2 glutathione = glutathione disulfide + L-ascorbate. The enzyme catalyses methylarsonate + 2 glutathione + H(+) = methylarsonous acid + glutathione disulfide + H2O. Its function is as follows. Exhibits glutathione-dependent thiol transferase and dehydroascorbate reductase activities. Has S-(phenacyl)glutathione reductase activity. Also has glutathione S-transferase activity. Participates in the biotransformation of inorganic arsenic and reduces monomethylarsonic acid (MMA) and dimethylarsonic acid. The sequence is that of Glutathione S-transferase omega-1 (Gsto1) from Rattus norvegicus (Rat).